Consider the following 368-residue polypeptide: 2-oxoglutarate-dependent dioxygenase frbJ (368 aa).

A Fe2OG dioxygenase domain is found at 171-277 (QQHKLKIVKY…RYSIPFFQGV (107 aa)). Fe cation is bound by residues His-198, Asp-200, and His-256. Residue Arg-268 coordinates 2-oxoglutarate.

This sequence belongs to the iron/ascorbate-dependent oxidoreductase family.

Its pathway is antifungal biosynthesis. Functionally, 2-oxoglutarate-dependent dioxygenase; part of the gene cluster that mediates the biosynthesis of the antifungal antibiotic FR901469, an inhibitor of beta-1,3-glucansynthase, exerting antifungal activity against the pathogenes Candida albicans and Aspergillus fumigatus. FR901469 is a cyclic depsipeptide containing 12 amino acid residues and a fatty acid chain. The NRPS frbI contains 12 modules responsible for the formation of the depsipeptide backbone which is denoted as Acyl-Thr-Ala-Tyr-Val-4OHPro-Thr-Thr-3OHPro-threo3OHGln-Gly-Thr-Orn-OH (C71H116N14O23). The PKS frbB is probably involved in the production of the hydrocarbon chain, and the acyl-CoA ligase frbC might be involved in the transport of the chain to the peptide ptoduct of frbI. Because FR901469 contains 3 hydroxylated amino acid residues, the 3 oxygenases frbA, frbH, and frbJ might be participating in amino acid hydroxylation. As no thioesterase domains were detected in frbI or frbB, the thioesterases frbD and frbE may instead release and cyclize the products of the NRPS and PKS, respectively. The sequence is that of 2-oxoglutarate-dependent dioxygenase frbJ from Dothideomycetidae sp. (strain 11243) (Fungal sp. (strain No.11243)).